Here is a 362-residue protein sequence, read N- to C-terminus: Chorismate synthase (362 aa).

Position 47 (Arg-47) interacts with NADP(+). FMN contacts are provided by residues 124–126, Gly-286, 301–305, and Arg-327; these read RSS and KPTAT.

It belongs to the chorismate synthase family. In terms of assembly, homotetramer. FMNH2 serves as cofactor.

It catalyses the reaction 5-O-(1-carboxyvinyl)-3-phosphoshikimate = chorismate + phosphate. The protein operates within metabolic intermediate biosynthesis; chorismate biosynthesis; chorismate from D-erythrose 4-phosphate and phosphoenolpyruvate: step 7/7. Its function is as follows. Catalyzes the anti-1,4-elimination of the C-3 phosphate and the C-6 proR hydrogen from 5-enolpyruvylshikimate-3-phosphate (EPSP) to yield chorismate, which is the branch point compound that serves as the starting substrate for the three terminal pathways of aromatic amino acid biosynthesis. This reaction introduces a second double bond into the aromatic ring system. The protein is Chorismate synthase of Gloeothece citriformis (strain PCC 7424) (Cyanothece sp. (strain PCC 7424)).